The primary structure comprises 124 residues: Small ribosomal subunit protein bS6 (124 aa).

Residues 93–124 (KKAETGPSSMMKTVEREEARKAQQAEYAANNS) are disordered. Over residues 105-115 (TVEREEARKAQ) the composition is skewed to basic and acidic residues.

Belongs to the bacterial ribosomal protein bS6 family.

Its function is as follows. Binds together with bS18 to 16S ribosomal RNA. This is Small ribosomal subunit protein bS6 from Variovorax paradoxus (strain S110).